Consider the following 106-residue polypeptide: Large ribosomal subunit protein uL24 (106 aa).

It belongs to the universal ribosomal protein uL24 family. In terms of assembly, part of the 50S ribosomal subunit.

One of two assembly initiator proteins, it binds directly to the 5'-end of the 23S rRNA, where it nucleates assembly of the 50S subunit. Functionally, one of the proteins that surrounds the polypeptide exit tunnel on the outside of the subunit. In Desulforamulus reducens (strain ATCC BAA-1160 / DSM 100696 / MI-1) (Desulfotomaculum reducens), this protein is Large ribosomal subunit protein uL24.